The sequence spans 151 residues: Deoxyuridine 5'-triphosphate nucleotidohydrolase (151 aa).

Residues arginine 70–glycine 72, asparagine 83, leucine 87–aspartate 89, and methionine 97 each bind substrate.

It belongs to the dUTPase family. Mg(2+) serves as cofactor.

It catalyses the reaction dUTP + H2O = dUMP + diphosphate + H(+). It participates in pyrimidine metabolism; dUMP biosynthesis; dUMP from dCTP (dUTP route): step 2/2. Functionally, this enzyme is involved in nucleotide metabolism: it produces dUMP, the immediate precursor of thymidine nucleotides and it decreases the intracellular concentration of dUTP so that uracil cannot be incorporated into DNA. In Pseudomonas aeruginosa (strain UCBPP-PA14), this protein is Deoxyuridine 5'-triphosphate nucleotidohydrolase.